The following is a 950-amino-acid chain: Lon protease homolog, mitochondrial (950 aa).

Residues 1 to 65 (MAASTGYVRL…VPMGGGQWRG (65 aa)) constitute a mitochondrion transit peptide. Disordered stretches follow at residues 67–94 (WDAG…SGEG) and 212–243 (PEGL…LGAK). The region spanning 112 to 360 (LPLIAISRNP…KALSLLKKEF (249 aa)) is the Lon N-terminal domain. Residues 224 to 233 (KSRRKLKRGK) are compositionally biased toward basic residues. Position 513–520 (513–520 (GPPGVGKT)) interacts with ATP. In terms of domain architecture, Lon proteolytic spans 749-939 (VTPPGVVMGL…RDIFRIAFPL (191 aa)). Active-site residues include serine 845 and lysine 888.

It belongs to the peptidase S16 family. As to quaternary structure, homohexamer. Organized in a ring with a central cavity. The ATP-binding and proteolytic domains (AP-domain) form a hexameric chamber, while the N-terminal domain is arranged as a trimer of dimers. DNA and RNA binding is stimulated by substrate and inhibited by ATP binding. Interacts with TWNK and mitochondrial DNA polymerase subunit POLG.

It localises to the mitochondrion matrix. It carries out the reaction Hydrolysis of proteins in presence of ATP.. Its function is as follows. ATP-dependent serine protease that mediates the selective degradation of misfolded, unassembled or oxidatively damaged polypeptides as well as certain short-lived regulatory proteins in the mitochondrial matrix. Endogenous substrates include mitochondrial steroidogenic acute regulatory (StAR) protein, DELE1, helicase Twinkle (TWNK) and the large ribosomal subunit protein MRPL32/bL32m. MRPL32/bL32m is protected from degradation by LONP1 when it is bound to a nucleic acid (RNA), but TWNK is not. May also have a chaperone function in the assembly of inner membrane protein complexes. Participates in the regulation of mitochondrial gene expression and in the maintenance of the integrity of the mitochondrial genome. Binds to mitochondrial promoters and RNA in a single-stranded, site-specific, and strand-specific manner. May regulate mitochondrial DNA replication and/or gene expression using site-specific, single-stranded DNA binding to target the degradation of regulatory proteins binding to adjacent sites in mitochondrial promoters. The sequence is that of Lon protease homolog, mitochondrial (Lonp1) from Rattus norvegicus (Rat).